The sequence spans 296 residues: Protoheme IX farnesyltransferase (296 aa).

9 helical membrane-spanning segments follow: residues 14-34 (IIFG…KGVI), 36-56 (YPLF…GCVF), 75-95 (VLVK…ILGI), 99-119 (LLLY…GFVI), 133-153 (VYGT…GYCA), 163-183 (LILL…IAIF), 209-229 (ITLY…SGYA), 234-254 (LVVA…GYKA), and 265-285 (FVFS…DFNV).

It belongs to the UbiA prenyltransferase family. Protoheme IX farnesyltransferase subfamily.

The protein localises to the cell inner membrane. The catalysed reaction is heme b + (2E,6E)-farnesyl diphosphate + H2O = Fe(II)-heme o + diphosphate. It participates in porphyrin-containing compound metabolism; heme O biosynthesis; heme O from protoheme: step 1/1. In terms of biological role, converts heme B (protoheme IX) to heme O by substitution of the vinyl group on carbon 2 of heme B porphyrin ring with a hydroxyethyl farnesyl side group. This Yersinia enterocolitica serotype O:8 / biotype 1B (strain NCTC 13174 / 8081) protein is Protoheme IX farnesyltransferase.